Consider the following 950-residue polypeptide: Bifunctional glutamine synthetase adenylyltransferase/adenylyl-removing enzyme (950 aa).

The tract at residues methionine 1–glutamate 443 is adenylyl removase. The segment at glutamate 450 to isoleucine 950 is adenylyl transferase.

This sequence belongs to the GlnE family. It depends on Mg(2+) as a cofactor.

The catalysed reaction is [glutamine synthetase]-O(4)-(5'-adenylyl)-L-tyrosine + phosphate = [glutamine synthetase]-L-tyrosine + ADP. It catalyses the reaction [glutamine synthetase]-L-tyrosine + ATP = [glutamine synthetase]-O(4)-(5'-adenylyl)-L-tyrosine + diphosphate. In terms of biological role, involved in the regulation of glutamine synthetase GlnA, a key enzyme in the process to assimilate ammonia. When cellular nitrogen levels are high, the C-terminal adenylyl transferase (AT) inactivates GlnA by covalent transfer of an adenylyl group from ATP to specific tyrosine residue of GlnA, thus reducing its activity. Conversely, when nitrogen levels are low, the N-terminal adenylyl removase (AR) activates GlnA by removing the adenylyl group by phosphorolysis, increasing its activity. The regulatory region of GlnE binds the signal transduction protein PII (GlnB) which indicates the nitrogen status of the cell. In Vibrio vulnificus (strain CMCP6), this protein is Bifunctional glutamine synthetase adenylyltransferase/adenylyl-removing enzyme.